The sequence spans 327 residues: Zinc transport protein ZntB (327 aa).

The Cytoplasmic portion of the chain corresponds to 1-273 (MEAIKGSEVN…ARRTYTMSLM (273 aa)). The helical transmembrane segment at 274 to 294 (AMVFLPSTFLTGLFGVNLGGI) threads the bilayer. The Periplasmic segment spans residues 295 to 300 (PGGAWH). A helical transmembrane segment spans residues 301-321 (FGFSMFCILLVVLIGGVTLWL). Residues 322–327 (HRSKWL) are Cytoplasmic-facing.

The protein belongs to the CorA metal ion transporter (MIT) (TC 1.A.35) family.

The protein localises to the cell inner membrane. It catalyses the reaction Zn(2+)(out) + H(+)(out) = Zn(2+)(in) + H(+)(in). In terms of biological role, zinc transporter. Acts as a Zn(2+):proton symporter, which likely mediates zinc ion uptake. In Citrobacter koseri (strain ATCC BAA-895 / CDC 4225-83 / SGSC4696), this protein is Zinc transport protein ZntB.